A 341-amino-acid polypeptide reads, in one-letter code: MENLQLVLFVLGAIAIVAVLVHGFWSIRKQQPKSLKESPMTGFYKDQGATRDHQGFDADGIGQVRVRKGSPISDDERAEDEIDFAPKEPTLTSEGQMDSSVRQDENVAEAGDDFSLSDQPKQRVTRQRQEPVLSAEVQQEEINQMELGLGQEAAPNQSSLFESTVPELSPEPEPSIEVPEPVSEPVLESVPEPEPVAPEPEVLPEPQDVLVLHVVAAEGEELNGAELLPSLLSLNFKFGDMSIFHRHEDNAGTGKTLFSLANMVKPGVFNLDDMEQFTTEGVVLFMTLPCHGDPLRNFSIMLNSAHQLADDLSGQLLDGGRVAWCENTKQNYLQRIRTQNS.

Over 1 to 6 (MENLQL) the chain is Periplasmic. The chain crosses the membrane as a helical span at residues 7-27 (VLFVLGAIAIVAVLVHGFWSI). At 28-341 (RKQQPKSLKE…YLQRIRTQNS (314 aa)) the chain is on the cytoplasmic side. Disordered stretches follow at residues 35–134 (LKES…PVLS) and 157–201 (QSSL…PEPE). Residues 90 to 100 (TLTSEGQMDSS) are compositionally biased toward polar residues. Low complexity predominate over residues 175–190 (SIEVPEPVSEPVLESV). A compositionally biased stretch (pro residues) spans 192–201 (EPEPVAPEPE).

The protein belongs to the ZipA family. In terms of assembly, interacts with FtsZ via their C-terminal domains.

The protein resides in the cell inner membrane. Its function is as follows. Essential cell division protein that stabilizes the FtsZ protofilaments by cross-linking them and that serves as a cytoplasmic membrane anchor for the Z ring. Also required for the recruitment to the septal ring of downstream cell division proteins. In Shewanella sediminis (strain HAW-EB3), this protein is Cell division protein ZipA.